The sequence spans 100 residues: Urease subunit gamma (100 aa).

The protein belongs to the urease gamma subunit family. As to quaternary structure, heterotrimer of UreA (gamma), UreB (beta) and UreC (alpha) subunits. Three heterotrimers associate to form the active enzyme.

It localises to the cytoplasm. The enzyme catalyses urea + 2 H2O + H(+) = hydrogencarbonate + 2 NH4(+). It functions in the pathway nitrogen metabolism; urea degradation; CO(2) and NH(3) from urea (urease route): step 1/1. This is Urease subunit gamma from Haemophilus influenzae (strain ATCC 51907 / DSM 11121 / KW20 / Rd).